An 81-amino-acid polypeptide reads, in one-letter code: Conotoxin Im016 (81 aa).

A signal peptide spans 1–21; it reads MSTLGMMLLILLLLVPLATFA. Residues 22–31 constitute a propeptide that is removed on maturation; it reads DDGPTMRGHR.

This sequence belongs to the conotoxin N superfamily. Contains 5 disulfide bonds. In terms of tissue distribution, expressed by the venom duct.

It localises to the secreted. Functionally, probable neurotoxin. The polypeptide is Conotoxin Im016 (Conus imperialis (Imperial cone)).